The chain runs to 861 residues: ToMV susceptible protein tm-2 (861 aa).

Residues 63–83 (VKNLLKDIQELAGDVEDLLDD) are a coiled coil. The 227-residue stretch at 162–388 (DDFNMLQAKL…LESMGHKVQD (227 aa)) folds into the NB-ARC domain. Position 185-192 (185-192 (GMPGLGKT)) interacts with ATP. 12 LRR repeats span residues 225–248 (LDIA…NLRS), 305–327 (LHAL…IFNF), 388–411 (DGCA…CFLY), 449–472 (LAED…TYNG), 510–536 (VARL…KLEK), 585–608 (MTCL…IVKL), 609–631 (TRLE…VWES), 652–680 (ISSF…FFEP), 689–713 (LRKL…PVPK), 735–758 (YPKI…AFPP), 781–804 (LPKL…LSGE), and 810–835 (FPQL…DVSM).

The protein belongs to the disease resistance NB-LRR family. As to quaternary structure, (Microbial infection) Fails to interact with the tobamovirus mouvement protein of tobacco mosaic virus (TMV).

The protein resides in the cell membrane. Its function is as follows. Potential inhibitor of viral mouvements which may confer resistance to some tobamoviruses but not to the tomato mosaic virus (ToMV) and tobacco mosaic virus (TMV). This chain is ToMV susceptible protein tm-2, found in Solanum lycopersicum (Tomato).